We begin with the raw amino-acid sequence, 475 residues long: ATP synthase subunit beta, chloroplastic (475 aa).

156–163 (GGAGVGKT) is a binding site for ATP.

Belongs to the ATPase alpha/beta chains family. As to quaternary structure, F-type ATPases have 2 components, CF(1) - the catalytic core - and CF(0) - the membrane proton channel. CF(1) has five subunits: alpha(3), beta(3), gamma(1), delta(1), epsilon(1). CF(0) has four main subunits: a(1), b(1), b'(1) and c(9-12).

Its subcellular location is the plastid. It localises to the chloroplast thylakoid membrane. The enzyme catalyses ATP + H2O + 4 H(+)(in) = ADP + phosphate + 5 H(+)(out). Produces ATP from ADP in the presence of a proton gradient across the membrane. The catalytic sites are hosted primarily by the beta subunits. In Gracilaria tenuistipitata var. liui (Red alga), this protein is ATP synthase subunit beta, chloroplastic.